Here is a 456-residue protein sequence, read N- to C-terminus: Exodeoxyribonuclease 7 large subunit (456 aa).

This sequence belongs to the XseA family. As to quaternary structure, heterooligomer composed of large and small subunits.

The protein localises to the cytoplasm. It catalyses the reaction Exonucleolytic cleavage in either 5'- to 3'- or 3'- to 5'-direction to yield nucleoside 5'-phosphates.. Bidirectionally degrades single-stranded DNA into large acid-insoluble oligonucleotides, which are then degraded further into small acid-soluble oligonucleotides. In Shigella dysenteriae serotype 1 (strain Sd197), this protein is Exodeoxyribonuclease 7 large subunit.